A 418-amino-acid polypeptide reads, in one-letter code: Adenylosuccinate synthetase (418 aa).

GTP-binding positions include G12–K18 and G40–T42. D13 serves as the catalytic Proton acceptor. Mg(2+) contacts are provided by D13 and G40. Residues D13–K16, N38–H41, T128, R142, Q221, T236, and R299 contribute to the IMP site. H41 functions as the Proton donor in the catalytic mechanism. A295–R301 contributes to the substrate binding site. GTP contacts are provided by residues R301, K327 to D329, and S399 to G401.

The protein belongs to the adenylosuccinate synthetase family. As to quaternary structure, homodimer. Requires Mg(2+) as cofactor.

The protein localises to the cytoplasm. The catalysed reaction is IMP + L-aspartate + GTP = N(6)-(1,2-dicarboxyethyl)-AMP + GDP + phosphate + 2 H(+). Its pathway is purine metabolism; AMP biosynthesis via de novo pathway; AMP from IMP: step 1/2. Plays an important role in the de novo pathway of purine nucleotide biosynthesis. Catalyzes the first committed step in the biosynthesis of AMP from IMP. The chain is Adenylosuccinate synthetase from Finegoldia magna (strain ATCC 29328 / DSM 20472 / WAL 2508) (Peptostreptococcus magnus).